A 338-amino-acid polypeptide reads, in one-letter code: RNA 3'-terminal phosphate cyclase (338 aa).

Residues Gln103 and 283–287 (YLADQ) each bind ATP. The active-site Tele-AMP-histidine intermediate is His308.

This sequence belongs to the RNA 3'-terminal cyclase family. Type 1 subfamily.

It is found in the cytoplasm. The enzyme catalyses a 3'-end 3'-phospho-ribonucleotide-RNA + ATP = a 3'-end 2',3'-cyclophospho-ribonucleotide-RNA + AMP + diphosphate. In terms of biological role, catalyzes the conversion of 3'-phosphate to a 2',3'-cyclic phosphodiester at the end of RNA. The mechanism of action of the enzyme occurs in 3 steps: (A) adenylation of the enzyme by ATP; (B) transfer of adenylate to an RNA-N3'P to produce RNA-N3'PP5'A; (C) and attack of the adjacent 2'-hydroxyl on the 3'-phosphorus in the diester linkage to produce the cyclic end product. The biological role of this enzyme is unknown but it is likely to function in some aspects of cellular RNA processing. This Escherichia coli O127:H6 (strain E2348/69 / EPEC) protein is RNA 3'-terminal phosphate cyclase.